Reading from the N-terminus, the 122-residue chain is Small ribosomal subunit protein uS13 (122 aa).

The tract at residues 99 to 122 (RGQRTHTNARTRKGPAKAIAGKKK) is disordered.

The protein belongs to the universal ribosomal protein uS13 family. As to quaternary structure, part of the 30S ribosomal subunit. Forms a loose heterodimer with protein S19. Forms two bridges to the 50S subunit in the 70S ribosome.

Functionally, located at the top of the head of the 30S subunit, it contacts several helices of the 16S rRNA. In the 70S ribosome it contacts the 23S rRNA (bridge B1a) and protein L5 of the 50S subunit (bridge B1b), connecting the 2 subunits; these bridges are implicated in subunit movement. Contacts the tRNAs in the A and P-sites. This chain is Small ribosomal subunit protein uS13, found in Agrobacterium fabrum (strain C58 / ATCC 33970) (Agrobacterium tumefaciens (strain C58)).